The chain runs to 215 residues: Ribose-5-phosphate isomerase A (215 aa).

Substrate is bound by residues Thr26–Thr29, Asp79–Asp82, and Lys92–Gly95. Glu101 functions as the Proton acceptor in the catalytic mechanism. Residue Lys119 participates in substrate binding.

The protein belongs to the ribose 5-phosphate isomerase family. In terms of assembly, homodimer.

The catalysed reaction is aldehydo-D-ribose 5-phosphate = D-ribulose 5-phosphate. Its pathway is carbohydrate degradation; pentose phosphate pathway; D-ribose 5-phosphate from D-ribulose 5-phosphate (non-oxidative stage): step 1/1. Catalyzes the reversible conversion of ribose-5-phosphate to ribulose 5-phosphate. This Xylella fastidiosa (strain Temecula1 / ATCC 700964) protein is Ribose-5-phosphate isomerase A.